The primary structure comprises 245 residues: Type III pantothenate kinase (245 aa).

Residue 6–13 (DQGNTILK) coordinates ATP. Substrate-binding positions include tyrosine 86 and 93–96 (GTDR). The active-site Proton acceptor is aspartate 95. Position 116 (aspartate 116) interacts with K(+). Threonine 119 is a binding site for ATP. Threonine 171 is a binding site for substrate.

The protein belongs to the type III pantothenate kinase family. Homodimer. NH4(+) serves as cofactor. Requires K(+) as cofactor.

The protein localises to the cytoplasm. The catalysed reaction is (R)-pantothenate + ATP = (R)-4'-phosphopantothenate + ADP + H(+). Its pathway is cofactor biosynthesis; coenzyme A biosynthesis; CoA from (R)-pantothenate: step 1/5. Its function is as follows. Catalyzes the phosphorylation of pantothenate (Pan), the first step in CoA biosynthesis. This Azobacteroides pseudotrichonymphae genomovar. CFP2 protein is Type III pantothenate kinase.